The following is a 302-amino-acid chain: Acetylglutamate kinase (302 aa).

Substrate is bound by residues 73–74 (GG), Arg-95, and Asn-200.

It belongs to the acetylglutamate kinase family. ArgB subfamily.

Its subcellular location is the cytoplasm. The enzyme catalyses N-acetyl-L-glutamate + ATP = N-acetyl-L-glutamyl 5-phosphate + ADP. It functions in the pathway amino-acid biosynthesis; L-arginine biosynthesis; N(2)-acetyl-L-ornithine from L-glutamate: step 2/4. Functionally, catalyzes the ATP-dependent phosphorylation of N-acetyl-L-glutamate. In Sphingopyxis alaskensis (strain DSM 13593 / LMG 18877 / RB2256) (Sphingomonas alaskensis), this protein is Acetylglutamate kinase.